The sequence spans 693 residues: MQNIDLISEKEAKKLLEELADKIAMYNHAYYIEDNPLVSDSEYDQLFNLNLKLENTFPHLVLSNSPSKKIGAKITNKFAKVIHQAPMLSLSNAFDEEDIRDFLERIKNFLRINEFTPIFCEPKIDGLSFSAIYKHGLFITGATRGDGYVGEDITINIKTIKNFPHKIDNAPEFLEVRGEIYIEKQDFVNLNKEQEAQNRGKFANPRNAAAGSIRQLDVAITAQRPLKYFIYSGGVTEKNLASTQEQLLAKLKALSFSVNEISKLASSEEEIFAFYEYLKTNRHNLPYEIDGVVYKLNNFAMQNRMGFIARSPRFAIAHKFPAIIGQTKLLSITVQVGRTGMLTPVAELDPLEIGGVVVSRATLHNFQDIARKDVRIKDYVFLQRAGDVIPQITGVDISKRSNDTVKFDTPVFCPSCNSKLRYVSEDIIIRCDNGLNCPAQNYERICHFVSKNAMDIAGLGRKQVAFLIDKRLISNPLDIFFLKKKNETNLIRLENMDGWGKKSVANLWQNIEKSQKISLQRFIYALGIRHIGEQNAKLLAREFVSYNNFIAQMELLSKNDSDVYQKLNDLEGIGDKMLVDIIDFFYVKENIQLIKKLGAVLNIEDYKETREQNILTGKILVFTGSLKTISRVEAKEIAEKLGAKVASSVSSNTDLLIVGVNGGSKLKKAKELNIKIIDEAEWLAFIKCLEKEV.

Residues 40-44 (DSEYD), 89-90 (SL), and Glu-121 contribute to the NAD(+) site. Lys-123 acts as the N6-AMP-lysine intermediate in catalysis. Positions 144, 179, 295, and 319 each coordinate NAD(+). Zn(2+) is bound by residues Cys-413, Cys-416, Cys-431, and Cys-437. A BRCT domain is found at 610–693 (REQNILTGKI…AFIKCLEKEV (84 aa)).

Belongs to the NAD-dependent DNA ligase family. LigA subfamily. The cofactor is Mg(2+). Mn(2+) is required as a cofactor.

It catalyses the reaction NAD(+) + (deoxyribonucleotide)n-3'-hydroxyl + 5'-phospho-(deoxyribonucleotide)m = (deoxyribonucleotide)n+m + AMP + beta-nicotinamide D-nucleotide.. DNA ligase that catalyzes the formation of phosphodiester linkages between 5'-phosphoryl and 3'-hydroxyl groups in double-stranded DNA using NAD as a coenzyme and as the energy source for the reaction. It is essential for DNA replication and repair of damaged DNA. The protein is DNA ligase of Rickettsia typhi (strain ATCC VR-144 / Wilmington).